The chain runs to 125 residues: UPF0231 protein APL_0968 (125 aa).

The protein belongs to the UPF0231 family.

This Actinobacillus pleuropneumoniae serotype 5b (strain L20) protein is UPF0231 protein APL_0968.